Here is a 1377-residue protein sequence, read N- to C-terminus: MAYSYTEKKRIRKSFAKRAAVLNVPFLLATQIESFASFLQADTPPPSRLNHGLQAAFTSIFPISSHSGNARLEFVQYMLGEPAFDVKECQQRGLTFASPLRARVRLVILDRDAPKETVKEVKEQEVYMGEIPLMTTTGSFVINGTERVIVSQLHRSPGVFFEHDRGKTHSSGKLLFSARIIPYRGSWLDFEFDPKDALYFRVDRRRKMPATILLRAIGMGPEEILATFHDFDAFHLRGNEAAFELVPDRLRGDVAKFDITDGAGNVIVARDKRITAKHIRELDQAGVKMISVPDEFLLGRIIARNIVDAETGEIVARANDEITEDLLDKLRDAGVKDLETLYVNDLDRGAYISQTLRIDETADQWAARVAIYRMMRPGEPPTEDAVEALFQGLFYSEERYDLSSVGRMKFNRRAYPEKIEDKAPSWLKRFYETVGPRGEEGPATLSNEDILAVIGVLVELRNGRGEIDDIDHLGNRRVRSVGELAENQFRAGLVRVERAVKERLSQAESDNLMPHDLINAKPISAAIKEFFGSSQLSQFMDQTNPLSEITHKRRVSALGPGGLTRERAGFEVRDVHPTHYGRVCPIETPEGPNIGLINSLAVYAQTNRHGFLETPYRKVVDSKVTDQIDFLSAIEEGQYVIAQANAEIDADGMLEGDLVSCRHKGEFALSTADQVQYMDVAPGQIVSVAASLIPFLEHDDANRALMGANMQRQAVPCLRPEKPLVGTGIERTVAVDSGTAVQAMRGGIVDYVDANRIVVRVNDDETLAGEVGVDIYNMIKYTRSNQNTNINQRPVVKVGDHIGKGDVIADGASTDLGELALGQNMLVAFMPWNGYNFEDSILISERVVAEDRFTSIHIEELTVVARDTKLGPEEITRDIASLGEAQLSRLDESGIVYIGAEVDAGDVLVGKVTPKGETQLTPEEKLLRAIFGEKASDVKDTSLRVSSGMNGTVIDVQVFTREGIERDKRAQSIIDDMLRSFKTDLADQMRIVERDAFARIRRLIVGQKANGGPKKLLKGTAITGEYLDSLEFYHWFDIRMADEELAAQLEAIREGLEKTRKDFDQAFEIKKKKLTQGDELPPGVQKMVKVYLAVKRRLQPGDKMAGRHGNKGVVSRIVPIEDMPHMADGTPVDIVLNPLGVPSRMNIGQILETHLGWASKALGNKIGTMLRANAAAAEVRELLEHIYNDNGRPEDMGSLKDDEVIELASNLSKGVPFATPVFDGAKEEEIEAMFELAGLQPGGQVTLYDGRTGDAFDRQVTVGYKHVLKLHHLVDDKMHARSTGPYSLVTQQPLGGKAQFGGQRFGEMEVWALEAYGAAYTLQEMLTVKSDDVTGRTKVYESIVKGEHKIDAGMPESFNVLVKEIRSLAIDIDLDTY.

This sequence belongs to the RNA polymerase beta chain family. As to quaternary structure, the RNAP catalytic core consists of 2 alpha, 1 beta, 1 beta' and 1 omega subunit. When a sigma factor is associated with the core the holoenzyme is formed, which can initiate transcription.

It catalyses the reaction RNA(n) + a ribonucleoside 5'-triphosphate = RNA(n+1) + diphosphate. Functionally, DNA-dependent RNA polymerase catalyzes the transcription of DNA into RNA using the four ribonucleoside triphosphates as substrates. This is DNA-directed RNA polymerase subunit beta from Aromatoleum aromaticum (strain DSM 19018 / LMG 30748 / EbN1) (Azoarcus sp. (strain EbN1)).